The sequence spans 314 residues: F-box protein AUF2 (314 aa).

An F-box domain is found at 1–49; that stretch reads MDVFDGLPDPIIVDILNKVGDVKTLLRCSSLSKRFNSLVPQSESLTLRL.

As to quaternary structure, part of a SCF (ASK-cullin-F-box) protein ligase complex.

The protein resides in the nucleus. It participates in protein modification; protein ubiquitination. Its function is as follows. Component of SCF(ASK-cullin-F-box) E3 ubiquitin ligase complexes, which may mediate the ubiquitination and subsequent proteasomal degradation of target proteins. This Arabidopsis thaliana (Mouse-ear cress) protein is F-box protein AUF2.